Reading from the N-terminus, the 366-residue chain is MSLYRKRLKIIKGEGIYVWDDQGRRYVDLIAGIGVAILGHNHPEWVEGIREQLNKLVIAGPMFNHEEKEEMLEELSKFVNFEYLYMGNSGTEAVEAALKFARLYTGRKEIIAMVNAFHGRTMGALSATWKPKYKKDFEPLVPGFKHIPFNDVEAAKEAISKETAAVIVEPIQGESGVIPAKKEFMKALRDLTEDVGALLIVDEVQTGLRTGKFLAVEHYKIEPDIVTMGKGIGNGIPVGLTLTNFDVERGKHGSTFGGNPLACKAVAITLRILRKERLIEKAKNKFIQIDADEVVTTRGKGLMIGIVFKTTIGKYVEELQNRGYLVHTAGQRVMRLLPPLIISKETMQDVKLAIEGVINDLRGGEN.

Pyridoxal 5'-phosphate contacts are provided by residues 90–91 and phenylalanine 117; that span reads GT. Arginine 120 serves as a coordination point for substrate. 202-205 contributes to the pyridoxal 5'-phosphate binding site; that stretch reads DEVQ. Lysine 230 bears the N6-(pyridoxal phosphate)lysine mark. A substrate-binding site is contributed by serine 254. Threonine 255 is a binding site for pyridoxal 5'-phosphate.

It belongs to the class-III pyridoxal-phosphate-dependent aminotransferase family. LysJ subfamily. As to quaternary structure, homodimer. The cofactor is pyridoxal 5'-phosphate.

Its subcellular location is the cytoplasm. The catalysed reaction is [amino-group carrier protein]-C-terminal-gamma-(L-lysyl)-L-glutamate + 2-oxoglutarate = [amino-group carrier protein]-C-terminal-N-(1-carboxy-5-oxopentan-1-yl)-L-glutamine + L-glutamate. It catalyses the reaction [amino-group carrier protein]-C-terminal-gamma-(L-ornithyl)-L-glutamate + 2-oxoglutarate = [amino-group carrier protein]-C-terminal-gamma-(L-glutamyl-5-semialdehyde)-L-glutamate + L-glutamate. It participates in amino-acid biosynthesis; L-lysine biosynthesis via AAA pathway; L-lysine from L-alpha-aminoadipate (Thermus route): step 4/5. The protein operates within amino-acid biosynthesis; L-arginine biosynthesis. In terms of biological role, involved in both the arginine and lysine biosynthetic pathways. The sequence is that of Putative [LysW]-aminoadipate semialdehyde/glutamate semialdehyde transaminase from Pyrococcus horikoshii (strain ATCC 700860 / DSM 12428 / JCM 9974 / NBRC 100139 / OT-3).